The chain runs to 233 residues: Small ribosomal subunit protein uS3 (233 aa).

The region spanning 39 to 107 (VRTFLTKELK…PAQINISEVR (69 aa)) is the KH type-2 domain.

It belongs to the universal ribosomal protein uS3 family. Part of the 30S ribosomal subunit. Forms a tight complex with proteins S10 and S14.

Binds the lower part of the 30S subunit head. Binds mRNA in the 70S ribosome, positioning it for translation. The chain is Small ribosomal subunit protein uS3 from Pseudoalteromonas translucida (strain TAC 125).